Here is a 392-residue protein sequence, read N- to C-terminus: Dihydroorotate dehydrogenase (quinone) (392 aa).

Residues 90–94 (AGFDK) and threonine 114 each bind FMN. Position 94 (lysine 94) interacts with substrate. Position 139-143 (139-143 (NRMGF)) interacts with substrate. Asparagine 173 and asparagine 206 together coordinate FMN. Asparagine 206 contacts substrate. Serine 209 serves as the catalytic Nucleophile. Asparagine 211 contributes to the substrate binding site. FMN-binding residues include lysine 243 and valine 271. Substrate is bound at residue 272 to 273 (NT). Residues glycine 301, glycine 330, and 351–352 (YT) contribute to the FMN site.

The protein belongs to the dihydroorotate dehydrogenase family. Type 2 subfamily. In terms of assembly, monomer. Requires FMN as cofactor.

It is found in the cell membrane. The enzyme catalyses (S)-dihydroorotate + a quinone = orotate + a quinol. It participates in pyrimidine metabolism; UMP biosynthesis via de novo pathway; orotate from (S)-dihydroorotate (quinone route): step 1/1. Catalyzes the conversion of dihydroorotate to orotate with quinone as electron acceptor. The protein is Dihydroorotate dehydrogenase (quinone) of Prochlorococcus marinus (strain MIT 9313).